The following is a 303-amino-acid chain: MSEQAVEVSPKCLGPQHHINPLRFVMPPGSWDTHFHVFGPTTKYPYSETRKYTPPDSPFEEYVKLMLALGIERGVCVHPNIHGPDNSVTLDAVERSEGRFLAIVKIAPDVTLPQLKEMKKKGACGVRFAFNPEHGSGELDTALFDRVVQWCGELDWCVNLHFASNAIHSLAERLSQLTIPTLIDHFGRVHPTKGVDQPDFKTLVDLMRLPHMWVKLTGADRISRNSPSYQDVVPLARTLVDVAPDRVIWGTDWPHSGYFDVKRMPNDGDLTNLLLDFAPSEEQRRRILVDNPSRLFGQVAKGA.

The protein belongs to the metallo-dependent hydrolases superfamily. Sulfomuconolactone hydrolase family. Monomer. Zn(2+) serves as cofactor.

It carries out the reaction 4-sulfomuconolactone + H2O = maleylacetate + sulfite + 2 H(+). Completely inhibited by ZnCl(2) and CuCl(2). In terms of biological role, involved in the degradation of 4-sulfocatechol which is a central intermediate in the degradation of substituted sulfonated benzenes. Catalyzes the hydrolytical desulfonation of 4-sulfomuconolactone to yield maleylacetate. The sequence is that of 4-sulfomuconolactone hydrolase from Hydrogenophaga intermedia.